A 303-amino-acid polypeptide reads, in one-letter code: Ribosomal protein L11 methyltransferase (303 aa).

Residues Thr146, Gly167, Asp189, and Asn236 each contribute to the S-adenosyl-L-methionine site.

This sequence belongs to the methyltransferase superfamily. PrmA family.

The protein resides in the cytoplasm. It catalyses the reaction L-lysyl-[protein] + 3 S-adenosyl-L-methionine = N(6),N(6),N(6)-trimethyl-L-lysyl-[protein] + 3 S-adenosyl-L-homocysteine + 3 H(+). In terms of biological role, methylates ribosomal protein L11. This is Ribosomal protein L11 methyltransferase from Acinetobacter baylyi (strain ATCC 33305 / BD413 / ADP1).